Here is a 359-residue protein sequence, read N- to C-terminus: Protein RecA (359 aa).

64 to 71 contacts ATP; the sequence is GHESSGKT. Positions 328 to 359 are disordered; it reads NKYPNKDSNDSPKEGSKIKTKVNPAVTQDELI. Residues 331–344 are compositionally biased toward basic and acidic residues; sequence PNKDSNDSPKEGSK.

The protein belongs to the RecA family.

It is found in the cytoplasm. Functionally, can catalyze the hydrolysis of ATP in the presence of single-stranded DNA, the ATP-dependent uptake of single-stranded DNA by duplex DNA, and the ATP-dependent hybridization of homologous single-stranded DNAs. It interacts with LexA causing its activation and leading to its autocatalytic cleavage. The polypeptide is Protein RecA (Francisella tularensis subsp. novicida (strain U112)).